The following is a 344-amino-acid chain: MTDASFAPSASAEFVRGLPKAELHMHIEGSLEPELMFELAQRNGITLPFASVEEIRAAYDFSNLQDFLDIYYQGAGVLITEADFKDLALAYFQRLAADGGAHAEIFFDPQTHTDRGIAFDTVMNGLLAGMDEAEKTLGVTSKLILCFLRHLSEEAAFETLEQAKPWLAKLAGVGLDSSEVGHPPAKFARVLQASRDLGLKVVAHAGEEGPPAYVWEAIDLVKVDRIDHGNRALEDEALTARLVKDGITLTVCPLSNLKLCGVPSLDVHPLKRMLDLGLKATVNSDDPAYFGGYLLENYLATADAVGLTRDDIVTLAKNSFAGSFLTDAEKAQRIAAVEAYAAAH.

Residues His-24, His-26, and His-204 each contribute to the Zn(2+) site. Glu-207 functions as the Proton donor in the catalytic mechanism. Zn(2+) is bound at residue Asp-285. Asp-286 is a substrate binding site.

It belongs to the metallo-dependent hydrolases superfamily. Adenosine and AMP deaminases family. Adenine deaminase type 2 subfamily. Requires Zn(2+) as cofactor.

The enzyme catalyses adenine + H2O + H(+) = hypoxanthine + NH4(+). Catalyzes the hydrolytic deamination of adenine to hypoxanthine. Plays an important role in the purine salvage pathway and in nitrogen catabolism. This Caulobacter vibrioides (strain ATCC 19089 / CIP 103742 / CB 15) (Caulobacter crescentus) protein is Adenine deaminase.